Consider the following 427-residue polypeptide: Homogentisate 1,2-dioxygenase (427 aa).

His285 functions as the Proton acceptor in the catalytic mechanism. Positions 328 and 334 each coordinate Fe cation. Residues Tyr343 and His364 each coordinate homogentisate. Residue His364 participates in Fe cation binding.

The protein belongs to the homogentisate dioxygenase family. Hexamer; dimer of trimers. Requires Fe cation as cofactor.

It catalyses the reaction homogentisate + O2 = 4-maleylacetoacetate + H(+). The protein operates within amino-acid degradation; L-phenylalanine degradation; acetoacetate and fumarate from L-phenylalanine: step 4/6. Involved in the catabolism of homogentisate (2,5-dihydroxyphenylacetate or 2,5-OH-PhAc), a central intermediate in the degradation of phenylalanine and tyrosine. Catalyzes the oxidative ring cleavage of the aromatic ring of homogentisate to yield maleylacetoacetate. The chain is Homogentisate 1,2-dioxygenase from Caulobacter sp. (strain K31).